Here is a 217-residue protein sequence, read N- to C-terminus: Peptide methionine sulfoxide reductase MsrA 1 (217 aa).

C54 is an active-site residue.

It belongs to the MsrA Met sulfoxide reductase family.

It catalyses the reaction L-methionyl-[protein] + [thioredoxin]-disulfide + H2O = L-methionyl-(S)-S-oxide-[protein] + [thioredoxin]-dithiol. The catalysed reaction is [thioredoxin]-disulfide + L-methionine + H2O = L-methionine (S)-S-oxide + [thioredoxin]-dithiol. Has an important function as a repair enzyme for proteins that have been inactivated by oxidation. Catalyzes the reversible oxidation-reduction of methionine sulfoxide in proteins to methionine. This chain is Peptide methionine sulfoxide reductase MsrA 1 (msrA1), found in Caulobacter vibrioides (strain ATCC 19089 / CIP 103742 / CB 15) (Caulobacter crescentus).